The primary structure comprises 49 residues: Large ribosomal subunit protein bL33C (49 aa).

A disordered region spans residues 21–49 (KNKRNNPDRVEFKKYCPRDKKSTLHRETK). The span at 25 to 49 (NNPDRVEFKKYCPRDKKSTLHRETK) shows a compositional bias: basic and acidic residues.

It belongs to the bacterial ribosomal protein bL33 family.

In Bacillus licheniformis (strain ATCC 14580 / DSM 13 / JCM 2505 / CCUG 7422 / NBRC 12200 / NCIMB 9375 / NCTC 10341 / NRRL NRS-1264 / Gibson 46), this protein is Large ribosomal subunit protein bL33C.